The primary structure comprises 179 residues: Ubiquitin-conjugating enzyme E2 C (179 aa).

The interval 1–31 (MASQNVDPAAASSVASRKGQESGTSAARGSV) is disordered. One can recognise a UBC core domain in the interval 30 to 179 (SVGKRLQQEL…YQKQVREKEI (150 aa)). C114 (glycyl thioester intermediate) is an active-site residue.

It belongs to the ubiquitin-conjugating enzyme family. As to quaternary structure, component of the APC/C complex. In terms of processing, autoubiquitinated by the APC/C complex, leading to its degradation by the proteasome.

It catalyses the reaction S-ubiquitinyl-[E1 ubiquitin-activating enzyme]-L-cysteine + [E2 ubiquitin-conjugating enzyme]-L-cysteine = [E1 ubiquitin-activating enzyme]-L-cysteine + S-ubiquitinyl-[E2 ubiquitin-conjugating enzyme]-L-cysteine.. The enzyme catalyses S-ubiquitinyl-[E1 ubiquitin-activating enzyme]-L-cysteine + [acceptor protein]-L-lysine = [E1 ubiquitin-activating enzyme]-L-cysteine + N(6)-monoubiquitinyl-[acceptor protein]-L-lysine.. Its pathway is protein modification; protein ubiquitination. Catalyzes the covalent attachment of ubiquitin to other proteins. Acts as an essential factor of the anaphase promoting complex/cyclosome (APC/C), a cell cycle-regulated ubiquitin ligase that controls progression through mitosis. Acts by initiating 'Lys-11'-linked polyubiquitin chains on APC/C substrates, leading to the degradation of APC/C substrates by the proteasome and promoting mitotic exit. This is Ubiquitin-conjugating enzyme E2 C (ube2c) from Xenopus laevis (African clawed frog).